Here is a 253-residue protein sequence, read N- to C-terminus: 1-(5-phosphoribosyl)-5-[(5-phosphoribosylamino)methylideneamino] imidazole-4-carboxamide isomerase (253 aa).

D8 acts as the Proton acceptor in catalysis. D131 (proton donor) is an active-site residue.

Belongs to the HisA/HisF family.

It localises to the cytoplasm. It carries out the reaction 1-(5-phospho-beta-D-ribosyl)-5-[(5-phospho-beta-D-ribosylamino)methylideneamino]imidazole-4-carboxamide = 5-[(5-phospho-1-deoxy-D-ribulos-1-ylimino)methylamino]-1-(5-phospho-beta-D-ribosyl)imidazole-4-carboxamide. It participates in amino-acid biosynthesis; L-histidine biosynthesis; L-histidine from 5-phospho-alpha-D-ribose 1-diphosphate: step 4/9. This chain is 1-(5-phosphoribosyl)-5-[(5-phosphoribosylamino)methylideneamino] imidazole-4-carboxamide isomerase, found in Polynucleobacter necessarius subsp. necessarius (strain STIR1).